Reading from the N-terminus, the 246-residue chain is 23S rRNA (guanosine-2'-O-)-methyltransferase RlmB (246 aa).

S-adenosyl-L-methionine-binding residues include glycine 197, isoleucine 217, and leucine 226.

Belongs to the class IV-like SAM-binding methyltransferase superfamily. RNA methyltransferase TrmH family. RlmB subfamily.

The protein localises to the cytoplasm. The enzyme catalyses guanosine(2251) in 23S rRNA + S-adenosyl-L-methionine = 2'-O-methylguanosine(2251) in 23S rRNA + S-adenosyl-L-homocysteine + H(+). Its function is as follows. Specifically methylates the ribose of guanosine 2251 in 23S rRNA. This Haemophilus influenzae (strain ATCC 51907 / DSM 11121 / KW20 / Rd) protein is 23S rRNA (guanosine-2'-O-)-methyltransferase RlmB.